A 432-amino-acid chain; its full sequence is Adenylosuccinate synthetase (432 aa).

GTP is bound by residues 13-19 and 41-43; these read GDEGKGK and GHT. Asp14 (proton acceptor) is an active-site residue. The Mg(2+) site is built by Asp14 and Gly41. IMP contacts are provided by residues 14–17, 39–42, Thr130, Arg144, Gln225, Thr240, and Arg304; these read DEGK and NAGH. His42 acts as the Proton donor in catalysis. Substrate is bound at residue 300–306; it reads STTGRPR. Residues Arg306, 332-334, and 416-418 each bind GTP; these read KLD and STG.

This sequence belongs to the adenylosuccinate synthetase family. As to quaternary structure, homodimer. Mg(2+) is required as a cofactor.

It is found in the cytoplasm. It catalyses the reaction IMP + L-aspartate + GTP = N(6)-(1,2-dicarboxyethyl)-AMP + GDP + phosphate + 2 H(+). Its pathway is purine metabolism; AMP biosynthesis via de novo pathway; AMP from IMP: step 1/2. In terms of biological role, plays an important role in the de novo pathway of purine nucleotide biosynthesis. Catalyzes the first committed step in the biosynthesis of AMP from IMP. The protein is Adenylosuccinate synthetase of Nitrosomonas europaea (strain ATCC 19718 / CIP 103999 / KCTC 2705 / NBRC 14298).